We begin with the raw amino-acid sequence, 130 residues long: DNA-directed RNA polymerase subunit omega (130 aa).

Residues 108 to 130 (TEEELLKGLEGLAPPEEQPEEDE) form a disordered region.

Belongs to the RNA polymerase subunit omega family. In terms of assembly, the RNAP catalytic core consists of 2 alpha, 1 beta, 1 beta' and 1 omega subunit. When a sigma factor is associated with the core the holoenzyme is formed, which can initiate transcription.

The catalysed reaction is RNA(n) + a ribonucleoside 5'-triphosphate = RNA(n+1) + diphosphate. Promotes RNA polymerase assembly. Latches the N- and C-terminal regions of the beta' subunit thereby facilitating its interaction with the beta and alpha subunits. In Rhodopseudomonas palustris (strain ATCC BAA-98 / CGA009), this protein is DNA-directed RNA polymerase subunit omega.